The sequence spans 305 residues: Olfactory receptor 9G19 (305 aa).

Residues 1 to 24 (MDQNNNTVSEFIMLGFTTDPVIQK) are Extracellular-facing. The chain crosses the membrane as a helical span at residues 25 to 45 (VLFAVFLVVYTLTLMGNSSLI). At 46–55 (MLICNDSRLH) the chain is on the cytoplasmic side. A helical transmembrane segment spans residues 56–76 (TPMYFFIGNLSFLDLGLSSVY). The Extracellular segment spans residues 77–96 (TPKILETCISEDKSISFAGC). Cys96 and Cys178 form a disulfide bridge. A helical membrane pass occupies residues 97-117 (VAQFFFSAALDYTECYLLAAM). Residues 118–138 (AYDRYVAISKPLLYSQAMSLK) are Cytoplasmic-facing. The chain crosses the membrane as a helical span at residues 139–159 (LCVCFVVASYVGGFINSVIIT). Topologically, residues 160 to 204 (KDTFALTFCNDNVIDDFFCDIPPLVKLACGKKKSFQSVLFFLLTS) are extracellular. A helical membrane pass occupies residues 205–225 (NVIIPIVFILATYLFIIATIL). The Cytoplasmic segment spans residues 226–236 (RIRSTQGRLKA). Residues 237-257 (FSTCSSHLISVTLYYGSILYI) form a helical membrane-spanning segment. Residues 258–270 (YARPRSSYSLDRD) are Extracellular-facing. The chain crosses the membrane as a helical span at residues 271-291 (KIVSTFYTVVFPMLNPLIYSL). Residues 292-305 (RNKDVKEALNKLLK) lie on the Cytoplasmic side of the membrane.

The protein belongs to the G-protein coupled receptor 1 family.

The protein resides in the cell membrane. In terms of biological role, odorant receptor. This Mus musculus (Mouse) protein is Olfactory receptor 9G19.